A 215-amino-acid polypeptide reads, in one-letter code: Thymidylate kinase (215 aa).

12–19 (GIDGAGKS) is an ATP binding site.

It belongs to the thymidylate kinase family.

It carries out the reaction dTMP + ATP = dTDP + ADP. Its function is as follows. Phosphorylation of dTMP to form dTDP in both de novo and salvage pathways of dTTP synthesis. The polypeptide is Thymidylate kinase (Albidiferax ferrireducens (strain ATCC BAA-621 / DSM 15236 / T118) (Rhodoferax ferrireducens)).